Reading from the N-terminus, the 347-residue chain is Protein RecA (347 aa).

ATP is bound at residue 68–75 (GPESSGKT).

This sequence belongs to the RecA family.

Its subcellular location is the cytoplasm. Can catalyze the hydrolysis of ATP in the presence of single-stranded DNA, the ATP-dependent uptake of single-stranded DNA by duplex DNA, and the ATP-dependent hybridization of homologous single-stranded DNAs. It interacts with LexA causing its activation and leading to its autocatalytic cleavage. This Rhodococcus jostii (strain RHA1) protein is Protein RecA.